Here is a 506-residue protein sequence, read N- to C-terminus: Glutamate--tRNA ligase (506 aa).

The 'HIGH' region motif lies at 14–24 (PSPTGYLHIGG). A 'KMSKS' region motif is present at residues 261 to 265 (KLSKR). ATP is bound at residue K264.

The protein belongs to the class-I aminoacyl-tRNA synthetase family. Glutamate--tRNA ligase type 1 subfamily. As to quaternary structure, monomer.

Its subcellular location is the cytoplasm. The enzyme catalyses tRNA(Glu) + L-glutamate + ATP = L-glutamyl-tRNA(Glu) + AMP + diphosphate. In terms of biological role, catalyzes the attachment of glutamate to tRNA(Glu) in a two-step reaction: glutamate is first activated by ATP to form Glu-AMP and then transferred to the acceptor end of tRNA(Glu). In Roseiflexus sp. (strain RS-1), this protein is Glutamate--tRNA ligase.